A 467-amino-acid polypeptide reads, in one-letter code: Probable receptor-like protein kinase At3g17420 (467 aa).

An N-terminal signal peptide occupies residues methionine 1 to valine 35. Residues leucine 36–alanine 123 are Extracellular-facing. Asparagine 50 is a glycosylation site (N-linked (GlcNAc...) asparagine). Position 70 is a phosphoserine (serine 70). N-linked (GlcNAc...) asparagine glycosylation occurs at asparagine 79. Residues glycine 102–proline 126 are disordered. The helical transmembrane segment at proline 124 to leucine 144 threads the bilayer. Topologically, residues arginine 145–isoleucine 467 are cytoplasmic. A Protein kinase domain is found at phenylalanine 154 to methionine 433. ATP-binding positions include isoleucine 160–valine 168 and lysine 182. At tyrosine 227 the chain carries Phosphotyrosine. Aspartate 280 (proton acceptor) is an active-site residue. A phosphoserine mark is found at serine 284 and serine 313. Phosphothreonine occurs at positions 314 and 319. The residue at position 327 (tyrosine 327) is a Phosphotyrosine. Positions aspartate 413–isoleucine 467 are disordered. Over residues glutamate 447 to isoleucine 467 the composition is skewed to basic and acidic residues.

Belongs to the protein kinase superfamily. Ser/Thr protein kinase family.

Its subcellular location is the cell membrane. It catalyses the reaction L-seryl-[protein] + ATP = O-phospho-L-seryl-[protein] + ADP + H(+). It carries out the reaction L-threonyl-[protein] + ATP = O-phospho-L-threonyl-[protein] + ADP + H(+). In Arabidopsis thaliana (Mouse-ear cress), this protein is Probable receptor-like protein kinase At3g17420.